The primary structure comprises 129 residues: Natriuretic peptides B (129 aa).

The signal sequence occupies residues 1 to 26 (MDPQKALSRTLLLLLFLHLSLLGCRS). A disulfide bond links Cys-107 and Cys-123.

The protein belongs to the natriuretic peptide family. Post-translationally, the precursor molecule is proteolytically cleaved, possibly by FURIN or CORIN, to produce the active peptide. May undergo further proteolytic cleavage by various proteases such as DPP4, MME and possibly FAP, to give rise to a variety of shorter peptides. May be cleaved at Pro-99 by the prolyl endopeptidase FAP (seprase) activity (in vitro). May be degraded by IDE. During IDE degradation, the resulting products initially increase the activation of NPR1 and can also stimulate NPR2 to produce cGMP before the fragments are completely degraded and inactivated by IDE (in vitro).

It localises to the secreted. Functionally, cardiac hormone that plays a key role in mediating cardio-renal homeostasis. May also function as a paracrine antifibrotic factor in the heart. Acts by specifically binding and stimulating NPR1 to produce cGMP, which in turn activates effector proteins that drive various biological responses. Involved in regulating the extracellular fluid volume and maintaining the fluid-electrolyte balance through natriuresis, diuresis, vasorelaxation, and inhibition of renin and aldosterone secretion. Binds the clearance receptor NPR3. The chain is Natriuretic peptides B (NPPB) from Ovis aries (Sheep).